A 130-amino-acid polypeptide reads, in one-letter code: Protein ApaG (130 aa).

The 125-residue stretch at 3 to 127 (SQTTRDIEVT…FSLDSPHEKP (125 aa)) folds into the ApaG domain.

The protein is Protein ApaG of Paramagnetospirillum magneticum (strain ATCC 700264 / AMB-1) (Magnetospirillum magneticum).